The chain runs to 291 residues: Light-independent protochlorophyllide reductase iron-sulfur ATP-binding protein (291 aa).

Residues 10 to 15 and lysine 39 each bind ATP; that span reads GIGKST. Serine 14 is a Mg(2+) binding site. Residues cysteine 95 and cysteine 129 each coordinate [4Fe-4S] cluster. 180-181 contacts ATP; it reads NR.

Belongs to the NifH/BchL/ChlL family. As to quaternary structure, homodimer. Protochlorophyllide reductase is composed of three subunits; ChlL, ChlN and ChlB. [4Fe-4S] cluster is required as a cofactor.

The protein localises to the plastid. Its subcellular location is the chloroplast. It catalyses the reaction chlorophyllide a + oxidized 2[4Fe-4S]-[ferredoxin] + 2 ADP + 2 phosphate = protochlorophyllide a + reduced 2[4Fe-4S]-[ferredoxin] + 2 ATP + 2 H2O. It participates in porphyrin-containing compound metabolism; chlorophyll biosynthesis (light-independent). Functionally, component of the dark-operative protochlorophyllide reductase (DPOR) that uses Mg-ATP and reduced ferredoxin to reduce ring D of protochlorophyllide (Pchlide) to form chlorophyllide a (Chlide). This reaction is light-independent. The L component serves as a unique electron donor to the NB-component of the complex, and binds Mg-ATP. The polypeptide is Light-independent protochlorophyllide reductase iron-sulfur ATP-binding protein (Larix decidua (European larch)).